The following is a 135-amino-acid chain: Holo-[acyl-carrier-protein] synthase (135 aa).

Mg(2+) is bound by residues Asp-8 and Glu-57.

It belongs to the P-Pant transferase superfamily. AcpS family. Mg(2+) is required as a cofactor.

It localises to the cytoplasm. It catalyses the reaction apo-[ACP] + CoA = holo-[ACP] + adenosine 3',5'-bisphosphate + H(+). Transfers the 4'-phosphopantetheine moiety from coenzyme A to a Ser of acyl-carrier-protein. This is Holo-[acyl-carrier-protein] synthase from Methylobacterium sp. (strain 4-46).